We begin with the raw amino-acid sequence, 348 residues long: Abnormal cell lineage protein 44 (348 aa).

A signal peptide spans 1–25 (MRAAPFDFFFQSTALSTFFILCSLA). 11 disulfides stabilise this stretch: Cys91-Cys102, Cys141-Cys149, Cys151-Cys165, Cys213-Cys227, Cys215-Cys222, Cys272-Cys299, Cys282-Cys294, Cys298-Cys338, Cys314-Cys329, Cys316-Cys326, and Cys321-Cys322. Residue Ser219 is the site of O-palmitoleoyl serine; by mom-1 attachment. Asn286 carries N-linked (GlcNAc...) asparagine glycosylation.

The protein belongs to the Wnt family. In terms of processing, palmitoleoylation is required for efficient binding to frizzled receptors. Depalmitoleoylation leads to Wnt signaling pathway inhibition. Expressed in the tail hypodermis.

Its subcellular location is the secreted. The protein resides in the extracellular space. It is found in the extracellular matrix. Functionally, ligand for members of the frizzled family of seven transmembrane receptors. Affects male tail development, vulval precursor cell specification and egg laying. Involved in morphogenesis by influencing polarity of asymmetric cell divisions of the B, U, and F cells in the male, and the T cell in males and hermaphrodites. Controls spindle orientation in B-gamma cell division during male copulatory spicule development. Involved in specification of the P7.p lineage during vulval development. Has a role in providing polarity and default lin-17 localization in axon development and positioning of neuromuscular synapses in DA9 regions by negatively regulating synaptogenesis. Plays a role in motorneuron development by promoting the extension of the anterior neurite of ventral D-type GABAergic motorneurons along the anterior-posterior axis of the ventral nerve cord. Positively regulates cilium position and dendrite morphogenesis in postembryonic PQR gas-sensing neurons. This is likely through regulating the localization of grdn-1 to the distal dendrites of PQR sensory neurons. This chain is Abnormal cell lineage protein 44, found in Caenorhabditis elegans.